The following is a 462-amino-acid chain: Probable peptidoglycan glycosyltransferase FtsW (462 aa).

Residues 1–28 are disordered; the sequence is MREPRHVPQLRASGRRFPQRGRRHRFGK. Over 1–92 the chain is Cytoplasmic; the sequence is MREPRHVPQL…RSRMLDFDYS (92 aa). A compositionally biased stretch (basic residues) spans 13–27; it reads SGRRFPQRGRRHRFG. The chain crosses the membrane as a helical span at residues 93–113; it reads LLWVSIALLGLGVVMVYSASI. At 114 to 127 the chain is on the periplasmic side; it reads AMPDSPKYASYHDY. Residues 128–148 traverse the membrane as a helical segment; it reads AFLLRHCVSLVVAFVAAVIAF. The Cytoplasmic segment spans residues 149–158; that stretch reads RVPVSTWDKY. The helical transmembrane segment at 159-179 threads the bilayer; it reads APHLFLIALVGLVIVLIPHIG. Residues 180 to 192 are Periplasmic-facing; the sequence is KGVNGARRWIPLG. A helical membrane pass occupies residues 193 to 215; sequence ITNMQPSEIMKLAVTIYAANYTV. Topologically, residues 216–223 are cytoplasmic; the sequence is RKQEYMQS. Residues 224–244 traverse the membrane as a helical segment; the sequence is FAKGFLPMAFAVGLVGALLLL. The Periplasmic segment spans residues 245 to 247; sequence EPD. Residues 248–268 traverse the membrane as a helical segment; it reads MGAFMVVAAIAMGVLFLGGVN. Topologically, residues 269-270 are cytoplasmic; it reads GK. The chain crosses the membrane as a helical span at residues 271–291; that stretch reads LFGGLVATAVGTFTMLVWLSP. At 292 to 349 the chain is on the periplasmic side; sequence WRRERIFAYLDPWDERYAQGKAYQLTHSLIAFGRGEWFGVGLGGSVEKLNYLPEAHTD. Residues 350–370 traverse the membrane as a helical segment; that stretch reads FILAVIGEELGFVGVLVVILL. Over 371–398 the chain is Cytoplasmic; the sequence is FYWIVRRSFEIGRQALALDRTFAGLMAK. Residues 399–419 form a helical membrane-spanning segment; it reads GVGIWFGAQAFINMGVNLGLL. The Periplasmic portion of the chain corresponds to 420–425; that stretch reads PTKGLT. Residues 426–446 traverse the membrane as a helical segment; the sequence is LPLVSYGGSGILLNCISLAVL. The Cytoplasmic segment spans residues 447–462; sequence LRVDYENRVLMRGGKV.

The protein belongs to the SEDS family. FtsW subfamily.

It localises to the cell inner membrane. It carries out the reaction [GlcNAc-(1-&gt;4)-Mur2Ac(oyl-L-Ala-gamma-D-Glu-L-Lys-D-Ala-D-Ala)](n)-di-trans,octa-cis-undecaprenyl diphosphate + beta-D-GlcNAc-(1-&gt;4)-Mur2Ac(oyl-L-Ala-gamma-D-Glu-L-Lys-D-Ala-D-Ala)-di-trans,octa-cis-undecaprenyl diphosphate = [GlcNAc-(1-&gt;4)-Mur2Ac(oyl-L-Ala-gamma-D-Glu-L-Lys-D-Ala-D-Ala)](n+1)-di-trans,octa-cis-undecaprenyl diphosphate + di-trans,octa-cis-undecaprenyl diphosphate + H(+). It functions in the pathway cell wall biogenesis; peptidoglycan biosynthesis. In terms of biological role, peptidoglycan polymerase that is essential for cell division. In Burkholderia thailandensis (strain ATCC 700388 / DSM 13276 / CCUG 48851 / CIP 106301 / E264), this protein is Probable peptidoglycan glycosyltransferase FtsW.